The sequence spans 173 residues: MNSKRIALGIIALATVVSLGTAANNAFARGHGNYHGQGQMMGQAYEALTPEKQAKFDSLIDAFNTKVTPLRDKLWAKHTELNALSSNPNTKPEDIRKLTDEITALRTQYRTEAANLDASMQKEVGIKTHFATMGHRGMGGMGGGCGMMGGKGGMGSGMMQMHDGEGPHRGQNM.

A signal peptide spans 1-28 (MNSKRIALGIIALATVVSLGTAANNAFA).

Belongs to the ZraP family.

This Nitratidesulfovibrio vulgaris (strain ATCC 29579 / DSM 644 / CCUG 34227 / NCIMB 8303 / VKM B-1760 / Hildenborough) (Desulfovibrio vulgaris) protein is Zinc resistance-associated protein homolog.